The following is a 327-amino-acid chain: Lipoyl synthase (327 aa).

Residues cysteine 72, cysteine 77, cysteine 83, cysteine 98, cysteine 102, cysteine 105, and serine 313 each contribute to the [4Fe-4S] cluster site. The 220-residue stretch at 83-302 folds into the Radical SAM core domain; the sequence is CWSHGTATIM…RRVGLEKGFL (220 aa).

Belongs to the radical SAM superfamily. Lipoyl synthase family. [4Fe-4S] cluster is required as a cofactor.

It localises to the cytoplasm. It catalyses the reaction [[Fe-S] cluster scaffold protein carrying a second [4Fe-4S](2+) cluster] + N(6)-octanoyl-L-lysyl-[protein] + 2 oxidized [2Fe-2S]-[ferredoxin] + 2 S-adenosyl-L-methionine + 4 H(+) = [[Fe-S] cluster scaffold protein] + N(6)-[(R)-dihydrolipoyl]-L-lysyl-[protein] + 4 Fe(3+) + 2 hydrogen sulfide + 2 5'-deoxyadenosine + 2 L-methionine + 2 reduced [2Fe-2S]-[ferredoxin]. It participates in protein modification; protein lipoylation via endogenous pathway; protein N(6)-(lipoyl)lysine from octanoyl-[acyl-carrier-protein]: step 2/2. Its function is as follows. Catalyzes the radical-mediated insertion of two sulfur atoms into the C-6 and C-8 positions of the octanoyl moiety bound to the lipoyl domains of lipoate-dependent enzymes, thereby converting the octanoylated domains into lipoylated derivatives. This Francisella philomiragia subsp. philomiragia (strain ATCC 25017 / CCUG 19701 / FSC 153 / O#319-036) protein is Lipoyl synthase.